Consider the following 240-residue polypeptide: Adenosine 5'-phosphosulfate reductase (240 aa).

Residues Cys125, Cys126, Cys208, and Cys211 each coordinate [4Fe-4S] cluster. The active-site Nucleophile; cysteine thiosulfonate intermediate is the Cys234.

This sequence belongs to the PAPS reductase family. CysH subfamily. Requires [4Fe-4S] cluster as cofactor.

Its subcellular location is the cytoplasm. It catalyses the reaction [thioredoxin]-disulfide + sulfite + AMP + 2 H(+) = adenosine 5'-phosphosulfate + [thioredoxin]-dithiol. It functions in the pathway sulfur metabolism; hydrogen sulfide biosynthesis; sulfite from sulfate. Functionally, catalyzes the formation of sulfite from adenosine 5'-phosphosulfate (APS) using thioredoxin as an electron donor. This Oceanobacillus iheyensis (strain DSM 14371 / CIP 107618 / JCM 11309 / KCTC 3954 / HTE831) protein is Adenosine 5'-phosphosulfate reductase.